Consider the following 1246-residue polypeptide: Superkiller complex protein 2 (1246 aa).

The interval 220–246 is disordered; it reads LGGGDEDENEAVGQPGGPRGDTVSASP. Residues Ser245 and Ser256 each carry the phosphoserine modification. In terms of domain architecture, Helicase ATP-binding spans 319–475; that stretch reads ILHLERHDSV…WIGRLKRRQI (157 aa). 332–339 serves as a coordination point for ATP; it reads AHTSAGKT. The short motif at 423–426 is the DEVH box element; sequence DEVH. The Helicase C-terminal domain maps to 585–755; it reads GLTSLDLTTS…LTYTMILNLL (171 aa).

The protein belongs to the helicase family. SKI2 subfamily. In terms of assembly, component of the SKI complex which consists of SKIC2, SKIC3 and SKIC8. Interacts with HBS1L isoform 2.

It localises to the nucleus. The protein localises to the cytoplasm. The catalysed reaction is ATP + H2O = ADP + phosphate + H(+). Its function is as follows. Helicase component of the SKI complex, a multiprotein complex that assists the RNA-degrading exosome during the mRNA decay and quality-control pathways. The SKI complex catalyzes mRNA extraction from 80S ribosomal complexes in the 3'-5' direction and channels mRNA to the cytosolic exosome for degradation. SKI-mediated extraction of mRNA from stalled ribosomes allow binding of the Pelota-HBS1L complex and subsequent ribosome disassembly by ABCE1 for ribosome recycling. In the nucleus, the SKI complex associates with transcriptionally active genes in a manner dependent on PAF1 complex (PAF1C). The chain is Superkiller complex protein 2 from Homo sapiens (Human).